We begin with the raw amino-acid sequence, 120 residues long: cAMP-responsive element-binding protein-like 2 (120 aa).

The interval 1 to 24 (MDDSKVVGGKVKKPGKRGRKPAKI) is disordered. Residues 10–21 (KVKKPGKRGRKP) show a composition bias toward basic residues. One can recognise a bZIP domain in the interval 23–86 (KIDLKAKLER…MAMDQGKIPS (64 aa)). The basic motif stretch occupies residues 29–60 (KLERSRQSARECRARKKLRYQYLEELVSSRER). Positions 62–69 (ICALREEL) are leucine-zipper. The disordered stretch occupies residues 93–120 (TGEEQSKSQQNSSRHMKAGKTDANSNSW).

Belongs to the bZIP family. ATF subfamily. In terms of assembly, interacts with CREB1; regulates CREB1 phosphorylation, stability and transcriptional activity. Interacts with immediate-early (IE) protein BICP22 of bovine herpesvirus-1 (BHV-1). In terms of processing, phosphorylated by AMPK.

The protein resides in the nucleus. Functionally, probable regulator of CREB1 transcriptional activity which is involved in adipose cells differentiation. May also play a regulatory role in the cell cycle. This Bos taurus (Bovine) protein is cAMP-responsive element-binding protein-like 2 (CREBL2).